A 143-amino-acid chain; its full sequence is Adrenodoxin, mitochondrial (143 aa).

The N-terminal 19 residues, 1-19 (CSAVAVRTLRPLSLSARAA), are a transit peptide targeting the mitochondrion. A 2Fe-2S ferredoxin-type domain is found at 26–130 (ITVHFINRDG…NMTVRVPEAV (105 aa)). The [2Fe-2S] cluster site is built by cysteine 65, cysteine 71, cysteine 74, and cysteine 111.

The protein belongs to the adrenodoxin/putidaredoxin family. The cofactor is [2Fe-2S] cluster.

Its subcellular location is the mitochondrion matrix. In terms of biological role, essential for the synthesis of various steroid hormones. Participates in the reduction of mitochondrial cytochrome P450 for steroidogenesis. Transfers electrons from adrenodoxin reductase to CYP11A1, a cytochrome P450 that catalyzes cholesterol side-chain cleavage. Does not form a ternary complex with adrenodoxin reductase and CYP11A1 but shuttles between the two enzymes to transfer electrons. This Gallus gallus (Chicken) protein is Adrenodoxin, mitochondrial (FDX1).